The chain runs to 375 residues: MQKLQLCVYIYLFMLIVAGPVDLNENSEQKENVEKEGLCNACTWRQNTKSSRIEAIKIQILSKLRLETAPNISKDVIRQLLPKAPPLRELIDQYDVQRDDSSDGSLEDDDYHATTETIITMPTESDFLMQVDGKPKCCFFKFSSKIQYNKVVKAQLWIYLRPVETPTTVFVQILRLIKPMKDGTRYTGIRSLKLDMNPGTGIWQSIDVKTVLQNWLKQPESNLGIEIKALDENGHDLAVTFPGPGEDGLNPFLEVKVTDTPKRSRRDFGLDCDEHSTESRCCRYPLTVDFEAFGWDWIIAPKRYKANYCSGECEFVFLQKYPHTHLVHQANPRGSAGPCCTPTKMSPINMLYFNGKEQIIYGKIPAMVVDRCGCS.

A signal peptide spans 1–23; sequence MQKLQLCVYIYLFMLIVAGPVDL. The propeptide occupies 24 to 266; that stretch reads NENSEQKENV…VTDTPKRSRR (243 aa). N-linked (GlcNAc...) asparagine glycosylation occurs at Asn71. 4 disulfides stabilise this stretch: Cys272–Cys282, Cys281–Cys340, Cys309–Cys372, and Cys313–Cys374.

The protein belongs to the TGF-beta family. Homodimer; disulfide-linked. Interacts with WFIKKN2, leading to inhibit its activity. Interacts with FST3. Synthesized as large precursor molecule that undergoes proteolytic cleavage to generate an N-terminal propeptide and a disulfide linked C-terminal dimer, which is the biologically active molecule. The circulating form consists of a latent complex of the C-terminal dimer and other proteins, including its propeptide, which maintain the C-terminal dimer in a latent, inactive state. Ligand activation requires additional cleavage of the prodomain by a tolloid-like metalloproteinase.

The protein localises to the secreted. In terms of biological role, acts specifically as a negative regulator of skeletal muscle growth. The protein is Growth/differentiation factor 8 (MSTN) of Homo sapiens (Human).